A 101-amino-acid polypeptide reads, in one-letter code: Small ribosomal subunit protein uS14A (101 aa).

This sequence belongs to the universal ribosomal protein uS14 family. In terms of assembly, part of the 30S ribosomal subunit. Contacts proteins S3 and S10.

Its function is as follows. Binds 16S rRNA, required for the assembly of 30S particles and may also be responsible for determining the conformation of the 16S rRNA at the A site. This is Small ribosomal subunit protein uS14A from Salinispora tropica (strain ATCC BAA-916 / DSM 44818 / JCM 13857 / NBRC 105044 / CNB-440).